A 376-amino-acid polypeptide reads, in one-letter code: MYG1 exonuclease (376 aa).

Residues 1–47 (MGHRFLRGLLTLLLPPPPLYTRHRMLGPESVPPPKRSRSKLMAPPRI) constitute a mitochondrion transit peptide. Ser-120 carries the phosphoserine modification. Lys-267 and Lys-273 each carry N6-acetyllysine.

It belongs to the MYG1 family. In terms of tissue distribution, ubiquitously expressed, with highest levels in testis.

The protein localises to the nucleus. It localises to the nucleoplasm. It is found in the mitochondrion matrix. Its subcellular location is the nucleolus. Its function is as follows. 3'-5' RNA exonuclease which cleaves in situ on specific transcripts in both nucleus and mitochondrion. Involved in regulating spatially segregated organellar RNA processing, acts as a coordinator of nucleo-mitochondrial crosstalk. In nucleolus, processes pre-ribosomal RNA involved in ribosome assembly and alters cytoplasmic translation. In mitochondrial matrix, processes 3'-termini of the mito-ribosomal and messenger RNAs and controls translation of mitochondrial proteins. This is MYG1 exonuclease from Homo sapiens (Human).